Consider the following 86-residue polypeptide: Small ribosomal subunit protein bS18 (86 aa).

The protein belongs to the bacterial ribosomal protein bS18 family. As to quaternary structure, part of the 30S ribosomal subunit. Forms a tight heterodimer with protein bS6.

In terms of biological role, binds as a heterodimer with protein bS6 to the central domain of the 16S rRNA, where it helps stabilize the platform of the 30S subunit. This is Small ribosomal subunit protein bS18 from Campylobacter curvus (strain 525.92).